A 944-amino-acid polypeptide reads, in one-letter code: Valine--tRNA ligase (944 aa).

Residues 43 to 53 (PNVTGTLHMGH) carry the 'HIGH' region motif. The 'KMSKS' region motif lies at 550–554 (KMSKS). Lys553 is an ATP binding site. Residues 878–944 (LVDMDAERTR…TGLREQRAKL (67 aa)) adopt a coiled-coil conformation.

The protein belongs to the class-I aminoacyl-tRNA synthetase family. ValS type 1 subfamily. In terms of assembly, monomer.

Its subcellular location is the cytoplasm. It catalyses the reaction tRNA(Val) + L-valine + ATP = L-valyl-tRNA(Val) + AMP + diphosphate. Catalyzes the attachment of valine to tRNA(Val). As ValRS can inadvertently accommodate and process structurally similar amino acids such as threonine, to avoid such errors, it has a 'posttransfer' editing activity that hydrolyzes mischarged Thr-tRNA(Val) in a tRNA-dependent manner. This Xanthomonas campestris pv. campestris (strain B100) protein is Valine--tRNA ligase.